The following is a 237-amino-acid chain: Ribonuclease PH (237 aa).

Phosphate-binding positions include arginine 86 and 124–126 (GTR).

It belongs to the RNase PH family. In terms of assembly, homohexameric ring arranged as a trimer of dimers.

The catalysed reaction is tRNA(n+1) + phosphate = tRNA(n) + a ribonucleoside 5'-diphosphate. Phosphorolytic 3'-5' exoribonuclease that plays an important role in tRNA 3'-end maturation. Removes nucleotide residues following the 3'-CCA terminus of tRNAs; can also add nucleotides to the ends of RNA molecules by using nucleoside diphosphates as substrates, but this may not be physiologically important. Probably plays a role in initiation of 16S rRNA degradation (leading to ribosome degradation) during starvation. This is Ribonuclease PH from Methylorubrum populi (strain ATCC BAA-705 / NCIMB 13946 / BJ001) (Methylobacterium populi).